Here is a 127-residue protein sequence, read N- to C-terminus: MQLVFSYIEHKSQVIPVCFWKENHQLHPLTGYLNDPMGGLNYFAFLDKVLSMLRDEDIQQGDISSNSWGVEIHGDQVYFCFLFAQEDTSLHFALSRAVLIDILVLWLAFRSQKPVAGYQEVLSFAEA.

This is an uncharacterized protein from Pasteurella multocida (strain Pm70).